We begin with the raw amino-acid sequence, 92 residues long: Acylphosphatase (92 aa).

Residues 7–92 form the Acylphosphatase-like domain; the sequence is KTRCTISGRV…DPAPAEFSVG (86 aa). Catalysis depends on residues arginine 22 and asparagine 40.

This sequence belongs to the acylphosphatase family.

It carries out the reaction an acyl phosphate + H2O = a carboxylate + phosphate + H(+). This chain is Acylphosphatase (acyP), found in Halorhodospira halophila (strain DSM 244 / SL1) (Ectothiorhodospira halophila (strain DSM 244 / SL1)).